The primary structure comprises 228 residues: 7-cyano-7-deazaguanine synthase (228 aa).

An ATP-binding site is contributed by 10 to 20 (FSGGQDSTTLA). The Zn(2+) site is built by C190, C205, C208, and C211.

Belongs to the QueC family. It depends on Zn(2+) as a cofactor.

The catalysed reaction is 7-carboxy-7-deazaguanine + NH4(+) + ATP = 7-cyano-7-deazaguanine + ADP + phosphate + H2O + H(+). It participates in purine metabolism; 7-cyano-7-deazaguanine biosynthesis. In terms of biological role, catalyzes the ATP-dependent conversion of 7-carboxy-7-deazaguanine (CDG) to 7-cyano-7-deazaguanine (preQ(0)). The polypeptide is 7-cyano-7-deazaguanine synthase (Helicobacter pylori (strain P12)).